A 555-amino-acid polypeptide reads, in one-letter code: Glutamine--tRNA ligase (555 aa).

The short motif at 34–44 is the 'HIGH' region element; sequence PEPNGYLHIGH. ATP contacts are provided by residues 35-37 and 41-47; these read EPN and HIGHAKS. Residues Asp67 and Tyr212 each contribute to the L-glutamine site. ATP-binding positions include Thr231, 261-262, and 269-271; these read RL and MSK. Positions 268-272 match the 'KMSKS' region motif; it reads IMSKR.

This sequence belongs to the class-I aminoacyl-tRNA synthetase family. As to quaternary structure, monomer.

The protein localises to the cytoplasm. It carries out the reaction tRNA(Gln) + L-glutamine + ATP = L-glutaminyl-tRNA(Gln) + AMP + diphosphate. This Erwinia tasmaniensis (strain DSM 17950 / CFBP 7177 / CIP 109463 / NCPPB 4357 / Et1/99) protein is Glutamine--tRNA ligase.